The sequence spans 256 residues: Chitinase 11 (256 aa).

Residues 1–22 (MRRLLPLAGATLLIAAAGGASG) form the signal peptide. 2 disulfide bridges follow: Cys-48-Cys-109 and Cys-214-Cys-247. The Proton donor role is filled by Glu-91.

It belongs to the glycosyl hydrolase 19 family. Chitinase class II subfamily. As to expression, expressed in leaves and at lower levels in roots, sheaths and meristems.

The enzyme catalyses Random endo-hydrolysis of N-acetyl-beta-D-glucosaminide (1-&gt;4)-beta-linkages in chitin and chitodextrins.. The protein is Chitinase 11 (Cht11) of Oryza sativa subsp. japonica (Rice).